Here is a 234-residue protein sequence, read N- to C-terminus: uncharacterized protein (234 aa).

Residues 1 to 12 (MGSSSSSSLNNS) show a composition bias toward low complexity. The disordered stretch occupies residues 1-184 (MGSSSSSSLN…TPYLSGANSR (184 aa)). 2 stretches are compositionally biased toward polar residues: residues 21–40 (TPES…SILS) and 52–64 (KSTS…NLTP). Over residues 66 to 77 (KSRWSFSSSKKS) the composition is skewed to low complexity. Over residues 105–120 (GDFTPSLGNTPKSSFS) the composition is skewed to polar residues. The segment covering 152–167 (LGELFRDSIREEREES) has biased composition (basic and acidic residues).

In terms of assembly, interacts with RLK902. As to expression, expressed in stems, rosette leaves and roots and weakly in inflorescences.

This is an uncharacterized protein from Arabidopsis thaliana (Mouse-ear cress).